The primary structure comprises 352 residues: Selenide, water dikinase (352 aa).

The active site involves Cys23. Residues Lys26 and 54–56 (SRD) contribute to the ATP site. Asp57 is a Mg(2+) binding site. ATP is bound by residues Asp74, Asp97, and 145–147 (GHS). Asp97 contributes to the Mg(2+) binding site. Asp233 is a Mg(2+) binding site.

It belongs to the selenophosphate synthase 1 family. Class I subfamily. As to quaternary structure, homodimer. Mg(2+) is required as a cofactor.

It carries out the reaction hydrogenselenide + ATP + H2O = selenophosphate + AMP + phosphate + 2 H(+). Its function is as follows. Synthesizes selenophosphate from selenide and ATP. The protein is Selenide, water dikinase of Shewanella sp. (strain MR-4).